Consider the following 348-residue polypeptide: D-erythrose-4-phosphate dehydrogenase (348 aa).

NAD(+)-binding positions include 12–13 (RI) and Arg81. Substrate-binding positions include 154–156 (SCT), Arg200, 213–214 (TK), and Arg236. Catalysis depends on Cys155, which acts as the Nucleophile. Position 318 (Asn318) interacts with NAD(+).

This sequence belongs to the glyceraldehyde-3-phosphate dehydrogenase family. Epd subfamily. As to quaternary structure, homotetramer.

The protein resides in the cytoplasm. The enzyme catalyses D-erythrose 4-phosphate + NAD(+) + H2O = 4-phospho-D-erythronate + NADH + 2 H(+). It participates in cofactor biosynthesis; pyridoxine 5'-phosphate biosynthesis; pyridoxine 5'-phosphate from D-erythrose 4-phosphate: step 1/5. Catalyzes the NAD-dependent conversion of D-erythrose 4-phosphate to 4-phosphoerythronate. This chain is D-erythrose-4-phosphate dehydrogenase, found in Salmonella gallinarum (strain 287/91 / NCTC 13346).